Here is a 132-residue protein sequence, read N- to C-terminus: Small ribosomal subunit protein uS8 (132 aa).

The protein belongs to the universal ribosomal protein uS8 family. Part of the 30S ribosomal subunit. Contacts proteins S5 and S12.

One of the primary rRNA binding proteins, it binds directly to 16S rRNA central domain where it helps coordinate assembly of the platform of the 30S subunit. This is Small ribosomal subunit protein uS8 from Staphylococcus haemolyticus (strain JCSC1435).